A 254-amino-acid polypeptide reads, in one-letter code: CRISPR-associated endoribonuclease Cas6 1 (254 aa).

Y32 acts as the Proton acceptor in catalysis. The active-site Proton donor is H47.

Belongs to the CRISPR-associated protein Cas6/Cse3/CasE family.

Functionally, CRISPR (clustered regularly interspaced short palindromic repeat) is an adaptive immune system that provides protection against mobile genetic elements (viruses, transposable elements and conjugative plasmids). CRISPR clusters contain sequences complementary to antecedent mobile elements and target invading nucleic acids. CRISPR clusters are transcribed and processed into CRISPR RNA (crRNA). This protein processes pre-crRNA into individual crRNA units. This is CRISPR-associated endoribonuclease Cas6 1 (cas6a) from Methanocaldococcus jannaschii (strain ATCC 43067 / DSM 2661 / JAL-1 / JCM 10045 / NBRC 100440) (Methanococcus jannaschii).